Consider the following 539-residue polypeptide: G protein-coupled receptor associated sorting protein 3 (539 aa).

Basic residues predominate over residues 1–10 (MTGSKNKARA). Disordered regions lie at residues 1–111 (MTGS…DSWF) and 132–170 (NSVA…EEEE). Composition is skewed to basic and acidic residues over residues 66–80 (VVAE…ESKA) and 88–106 (FNHK…DKPS). Over residues 132–146 (NSVAKCENKPSTSIQ) the composition is skewed to polar residues.

It belongs to the GPRASP family. As to quaternary structure, homodimer.

The protein localises to the cytoplasm. The protein resides in the nucleus. In terms of biological role, survival and differentiation promoting protein that plays a role in the regulation of neurosynaptogenesis. Induces phosphatase PP2A activity which results in APP dephosphorylation and inhibits BACE1-mediated processing of APP. The protein is G protein-coupled receptor associated sorting protein 3 (Gprasp3) of Rattus norvegicus (Rat).